The following is a 66-amino-acid chain: Large ribosomal subunit protein bL35 (66 aa).

It belongs to the bacterial ribosomal protein bL35 family.

The polypeptide is Large ribosomal subunit protein bL35 (Jannaschia sp. (strain CCS1)).